Reading from the N-terminus, the 342-residue chain is N-acetyl-gamma-glutamyl-phosphate reductase (342 aa).

C149 is a catalytic residue.

This sequence belongs to the NAGSA dehydrogenase family. Type 1 subfamily.

Its subcellular location is the cytoplasm. The enzyme catalyses N-acetyl-L-glutamate 5-semialdehyde + phosphate + NADP(+) = N-acetyl-L-glutamyl 5-phosphate + NADPH + H(+). It functions in the pathway amino-acid biosynthesis; L-arginine biosynthesis; N(2)-acetyl-L-ornithine from L-glutamate: step 3/4. Catalyzes the NADPH-dependent reduction of N-acetyl-5-glutamyl phosphate to yield N-acetyl-L-glutamate 5-semialdehyde. The chain is N-acetyl-gamma-glutamyl-phosphate reductase from Jannaschia sp. (strain CCS1).